The primary structure comprises 137 residues: Large ribosomal subunit protein uL16 (137 aa).

The protein belongs to the universal ribosomal protein uL16 family. Part of the 50S ribosomal subunit.

Functionally, binds 23S rRNA and is also seen to make contacts with the A and possibly P site tRNAs. The chain is Large ribosomal subunit protein uL16 from Methylorubrum extorquens (strain CM4 / NCIMB 13688) (Methylobacterium extorquens).